Reading from the N-terminus, the 331-residue chain is 6-phosphogluconolactonase (331 aa).

The protein belongs to the cycloisomerase 2 family.

The catalysed reaction is 6-phospho-D-glucono-1,5-lactone + H2O = 6-phospho-D-gluconate + H(+). It functions in the pathway carbohydrate degradation; pentose phosphate pathway; D-ribulose 5-phosphate from D-glucose 6-phosphate (oxidative stage): step 2/3. Its function is as follows. Catalyzes the hydrolysis of 6-phosphogluconolactone to 6-phosphogluconate. The chain is 6-phosphogluconolactonase from Salmonella choleraesuis (strain SC-B67).